A 393-amino-acid chain; its full sequence is S-adenosylmethionine synthase (393 aa).

Glu9 contributes to the Mg(2+) binding site. ATP is bound at residue His15. Position 43 (Glu43) interacts with K(+). Residues Glu56 and Gln99 each contribute to the L-methionine site. ATP is bound by residues 167-169 (DGK), 235-238 (SGRF), Asp246, 252-253 (RK), Ala269, Lys273, and Lys277. Residue Asp246 coordinates L-methionine. Lys277 is a binding site for L-methionine.

It belongs to the AdoMet synthase family. In terms of assembly, homotetramer. Mn(2+) serves as cofactor. Mg(2+) is required as a cofactor. It depends on Co(2+) as a cofactor. The cofactor is K(+).

The protein localises to the cytoplasm. The catalysed reaction is L-methionine + ATP + H2O = S-adenosyl-L-methionine + phosphate + diphosphate. Its pathway is amino-acid biosynthesis; S-adenosyl-L-methionine biosynthesis; S-adenosyl-L-methionine from L-methionine: step 1/1. Its function is as follows. Catalyzes the formation of S-adenosylmethionine from methionine and ATP. The reaction comprises two steps that are both catalyzed by the same enzyme: formation of S-adenosylmethionine (AdoMet) and triphosphate, and subsequent hydrolysis of the triphosphate. The sequence is that of S-adenosylmethionine synthase (SAMS) from Solanum palustre (Non-tuber-performing potato).